Here is a 139-residue protein sequence, read N- to C-terminus: Ribulose bisphosphate carboxylase small subunit, plasmid (139 aa).

It belongs to the RuBisCO small chain family. Heterohexadecamer of 8 large and 8 small subunits.

In terms of biological role, ruBisCO catalyzes two reactions: the carboxylation of D-ribulose 1,5-bisphosphate, the primary event in carbon dioxide fixation, as well as the oxidative fragmentation of the pentose substrate. Both reactions occur simultaneously and in competition at the same active site. Although the small subunit is not catalytic it is essential for maximal activity. The sequence is that of Ribulose bisphosphate carboxylase small subunit, plasmid from Cupriavidus necator (strain ATCC 17699 / DSM 428 / KCTC 22496 / NCIMB 10442 / H16 / Stanier 337) (Ralstonia eutropha).